Here is a 335-residue protein sequence, read N- to C-terminus: Transcription factor E2F5 (335 aa).

Positions 1 to 18 (MAAAEPTSSAQPTPQAQA) are enriched in low complexity. The tract at residues 1-40 (MAAAEPTSSAQPTPQAQAQPPPHGAPSSQPSAALAGGSSR) is disordered. The DNA-binding element occupies 37–108 (GSSRHEKSLG…KNSIQWKGVG (72 aa)). The segment at 66–88 (LKAAADTLAVRQKRRIYDITNVL) is leucine-zipper. Positions 71 to 108 (DTLAVRQKRRIYDITNVLEGIDLIEKKSKNSIQWKGVG) match the DEF box motif. Positions 109–205 (AGCNTKEVID…GQNGQKKYQI (97 aa)) are dimerization. The segment at 226–285 (SKPVVFPVPPPDDLTQPSSQSSTSVTPQKSTMAAQNLPEQHVSERSQTFQQTPAAEVSSG) is disordered. Residues 238-256 (DLTQPSSQSSTSVTPQKST) are compositionally biased toward low complexity. The segment at 277–335 (TPAAEVSSGSISGDIIDELMSSDVFPLLRLSPTPADDYNFNLDDNEGVCDLFDVQILNY) is transactivation. The RBL2 association stretch occupies residues 312 to 329 (DDYNFNLDDNEGVCDLFD).

This sequence belongs to the E2F/DP family. As to quaternary structure, component of the DRTF1/E2F transcription factor complex. Binds cooperatively with DP-1 to E2F sites. Interaction with retinoblastoma protein RB1 or proteins RBL1 and RBL2 inhibits the E2F transactivation domain. Component of the DREAM complex (also named LINC complex) at least composed of E2F4, E2F5, LIN9, LIN37, LIN52, LIN54, MYBL1, MYBL2, RBL1, RBL2, RBBP4, TFDP1 and TFDP2. The complex exists in quiescent cells where it represses cell cycle-dependent genes. It dissociates in S phase when LIN9, LIN37, LIN52 and LIN54 form a subcomplex that binds to MYBL2.

It is found in the nucleus. In terms of biological role, transcriptional activator that binds to E2F sites, these sites are present in the promoter of many genes whose products are involved in cell proliferation. May mediate growth factor-initiated signal transduction. It is likely involved in the early responses of resting cells to growth factor stimulation. Specifically required for multiciliate cell differentiation: together with MCIDAS and E2F5, binds and activate genes required for centriole biogenesis. This Mus musculus (Mouse) protein is Transcription factor E2F5 (E2f5).